The sequence spans 692 residues: Ribosome-releasing factor 2, mitochondrial (692 aa).

Residues 1 to 29 (MLKYAWQSGPKQRNRWLWHLSNQIWKRSY) constitute a mitochondrion transit peptide. In terms of domain architecture, tr-type G spans 31–310 (SKIRNIGILA…AVNAYLPAPE (280 aa)). GTP-binding positions include 40 to 47 (AHIDAGKT), 104 to 108 (DTPGH), and 158 to 161 (NKMD).

This sequence belongs to the TRAFAC class translation factor GTPase superfamily. Classic translation factor GTPase family. EF-G/EF-2 subfamily.

The protein localises to the mitochondrion. Mitochondrial GTPase that mediates the disassembly of ribosomes from messenger RNA at the termination of mitochondrial protein biosynthesis. Not involved in the GTP-dependent ribosomal translocation step during translation elongation. The polypeptide is Ribosome-releasing factor 2, mitochondrial (Drosophila sechellia (Fruit fly)).